The primary structure comprises 96 residues: Dynein light chain roadblock-type 2 (96 aa).

The residue at position 2 (Ala-2) is an N-acetylalanine.

The protein belongs to the GAMAD family. Homodimer. The cytoplasmic dynein 1 complex consists of two catalytic heavy chains (HCs) and a number of non-catalytic subunits presented by intermediate chains (ICs), light intermediate chains (LICs) and light chains (LCs); the composition seems to vary in respect to the IC, LIC and LC composition. The heavy chain homodimer serves as a scaffold for the probable homodimeric assembly of the respective non-catalytic subunits. The ICs and LICs bind directly to the HC dimer and the LCs assemble on the IC dimer. Interacts with DYNC1I1 and DYNC1I2. Self-associates. Interacts with DYNLRB1.

The protein resides in the cytoplasm. The protein localises to the cytoskeleton. In terms of biological role, acts as one of several non-catalytic accessory components of the cytoplasmic dynein 1 complex that are thought to be involved in linking dynein to cargos and to adapter proteins that regulate dynein function. Cytoplasmic dynein 1 acts as a motor for the intracellular retrograde motility of vesicles and organelles along microtubules. The sequence is that of Dynein light chain roadblock-type 2 (DYNLRB2) from Bos taurus (Bovine).